The chain runs to 315 residues: MKQSLLSVLTKKSLRLLAALFLVVTSVFSLPQAAQAFPIYAQQAYDSPREANGRIVCANCHLAAKPTQVEVPQAVLPDTVFEAVIKIPYDTDAQQVLGSGDLGPLNVGAVLMLPDGFQIAPDDRIPEKMKEEINGVFYQKYKPDTDNVIVVGPLSGADHQEIIFPVLSPDPATDPNIHFGKYSVHAGGNRGRGQIYPTGDKTNVNAVTSPAAGLVSSVSENSVTITTNDGQTVTESIPAGLEVVVSEGQAVADGAPLSSDPNVGGFGQKDTEIVLQSGTRIKWLMVFFSAIMISQTLLVLKKKQVEKVQAAEMNF.

The first 36 residues, 1–36 (MKQSLLSVLTKKSLRLLAALFLVVTSVFSLPQAAQA), serve as a signal peptide directing secretion. Heme is bound by residues F37, C57, C60, and H61. Residues 281–301 (IKWLMVFFSAIMISQTLLVLK) form a helical membrane-spanning segment.

This sequence belongs to the cytochrome f family. The 4 large subunits of the cytochrome b6-f complex are cytochrome b6, subunit IV (17 kDa polypeptide, PetD), cytochrome f and the Rieske protein, while the 4 small subunits are PetG, PetL, PetM and PetN. The complex functions as a dimer. Heme is required as a cofactor.

The protein localises to the cellular thylakoid membrane. Functionally, component of the cytochrome b6-f complex, which mediates electron transfer between photosystem II (PSII) and photosystem I (PSI), cyclic electron flow around PSI, and state transitions. This is Cytochrome f from Acaryochloris marina (strain MBIC 11017).